The chain runs to 481 residues: Trigger factor (481 aa).

The region spanning 174 to 261 (GDIAVVGFKG…LKDLKTRELP (88 aa)) is the PPIase FKBP-type domain. The segment at 430–481 (ENSTVTEKAPEAESDAAKASKPAAAKKDASKAKTAKTSKAKTAKAESESAES) is disordered. Residues 437-447 (KAPEAESDAAK) show a composition bias toward basic and acidic residues. Basic residues predominate over residues 462–471 (KTAKTSKAKT). Positions 472-481 (AKAESESAES) are enriched in basic and acidic residues.

Belongs to the FKBP-type PPIase family. Tig subfamily.

The protein resides in the cytoplasm. It carries out the reaction [protein]-peptidylproline (omega=180) = [protein]-peptidylproline (omega=0). Involved in protein export. Acts as a chaperone by maintaining the newly synthesized protein in an open conformation. Functions as a peptidyl-prolyl cis-trans isomerase. The protein is Trigger factor of Synechococcus sp. (strain WH7803).